The sequence spans 193 residues: Putative manganese efflux pump MntP (193 aa).

Transmembrane regions (helical) follow at residues 3–23 (LATL…AALG), 39–59 (VGAY…ALGL), 65–85 (IAAF…GHMV), 113–133 (LALA…GLAV), 138–158 (ILMA…GGVL), and 173–193 (VLGG…HLSA).

The protein belongs to the MntP (TC 9.B.29) family.

The protein localises to the cell inner membrane. Probably functions as a manganese efflux pump. The polypeptide is Putative manganese efflux pump MntP (Rhodospirillum rubrum (strain ATCC 11170 / ATH 1.1.1 / DSM 467 / LMG 4362 / NCIMB 8255 / S1)).